The following is a 55-amino-acid chain: Large ribosomal subunit protein bL33 (55 aa).

The protein belongs to the bacterial ribosomal protein bL33 family.

This Paraburkholderia phytofirmans (strain DSM 17436 / LMG 22146 / PsJN) (Burkholderia phytofirmans) protein is Large ribosomal subunit protein bL33.